The sequence spans 157 residues: 2-C-methyl-D-erythritol 2,4-cyclodiphosphate synthase (157 aa).

The a divalent metal cation site is built by aspartate 8 and histidine 10. 4-CDP-2-C-methyl-D-erythritol 2-phosphate contacts are provided by residues 8–10 (DVH) and 34–35 (HS). Residue histidine 42 participates in a divalent metal cation binding. 4-CDP-2-C-methyl-D-erythritol 2-phosphate-binding positions include 56–58 (DIG), 61–65 (FPDTD), 100–106 (AQAPKMA), 132–135 (TTTE), phenylalanine 139, and arginine 142.

It belongs to the IspF family. As to quaternary structure, homotrimer. Requires a divalent metal cation as cofactor.

It carries out the reaction 4-CDP-2-C-methyl-D-erythritol 2-phosphate = 2-C-methyl-D-erythritol 2,4-cyclic diphosphate + CMP. Its pathway is isoprenoid biosynthesis; isopentenyl diphosphate biosynthesis via DXP pathway; isopentenyl diphosphate from 1-deoxy-D-xylulose 5-phosphate: step 4/6. In terms of biological role, involved in the biosynthesis of isopentenyl diphosphate (IPP) and dimethylallyl diphosphate (DMAPP), two major building blocks of isoprenoid compounds. Catalyzes the conversion of 4-diphosphocytidyl-2-C-methyl-D-erythritol 2-phosphate (CDP-ME2P) to 2-C-methyl-D-erythritol 2,4-cyclodiphosphate (ME-CPP) with a corresponding release of cytidine 5-monophosphate (CMP). The polypeptide is 2-C-methyl-D-erythritol 2,4-cyclodiphosphate synthase (Pseudomonas fluorescens (strain SBW25)).